A 108-amino-acid chain; its full sequence is Zinc metalloproteinase/disintegrin (108 aa).

Residues 1–19 enclose the Peptidase M12B domain; that stretch reads NEYQTYLTDRNPQCILNEP. Residues 20 to 35 constitute a propeptide that is removed on maturation; sequence LRTDTVSTPVSGNELL. Residues 27-108 form the Disintegrin domain; sequence TPVSGNELLE…ADCPRNGFYG (82 aa). Intrachain disulfides connect cysteine 41/cysteine 56, cysteine 43/cysteine 51, cysteine 50/cysteine 73, cysteine 64/cysteine 70, cysteine 69/cysteine 94, and cysteine 82/cysteine 101. Residues 86–88 carry the Cell attachment site; atypical (KGD) motif; the sequence is KGD.

The protein belongs to the venom metalloproteinase (M12B) family. P-II subfamily. P-IIa sub-subfamily. In terms of assembly, monomeric (disintegrin). Requires Zn(2+) as cofactor. Expressed by the venom gland.

Its subcellular location is the secreted. Its function is as follows. Impairs hemostasis in the envenomed animal. Functionally, inhibits platelet aggregation induced by ADP, thrombin, platelet-activating factor and collagen. Acts by inhibiting fibrinogen interaction with platelet receptors GPIIb/GPIIIa (ITGA2B/ITGB3). This chain is Zinc metalloproteinase/disintegrin, found in Gloydius brevicauda (Korean slamosa snake).